The primary structure comprises 596 residues: Elongation factor 4 (596 aa).

Positions lysine 2–asparagine 183 constitute a tr-type G domain. Residues aspartate 14 to threonine 19 and asparagine 130 to aspartate 133 contribute to the GTP site.

The protein belongs to the TRAFAC class translation factor GTPase superfamily. Classic translation factor GTPase family. LepA subfamily.

It localises to the cell inner membrane. The catalysed reaction is GTP + H2O = GDP + phosphate + H(+). In terms of biological role, required for accurate and efficient protein synthesis under certain stress conditions. May act as a fidelity factor of the translation reaction, by catalyzing a one-codon backward translocation of tRNAs on improperly translocated ribosomes. Back-translocation proceeds from a post-translocation (POST) complex to a pre-translocation (PRE) complex, thus giving elongation factor G a second chance to translocate the tRNAs correctly. Binds to ribosomes in a GTP-dependent manner. This is Elongation factor 4 from Wolinella succinogenes (strain ATCC 29543 / DSM 1740 / CCUG 13145 / JCM 31913 / LMG 7466 / NCTC 11488 / FDC 602W) (Vibrio succinogenes).